The primary structure comprises 670 residues: FAD-binding monooxygenase ausC (670 aa).

FAD is bound by residues 144-147 (TWYW), 156-157 (DT), and Y162. 154–156 (MCD) serves as a coordination point for NADP(+). Residues 299–305 (TGASAVQ) and 322–323 (RT) each bind NADP(+).

This sequence belongs to the FAD-binding monooxygenase family. It depends on FAD as a cofactor.

It carries out the reaction preaustinoid A + AH2 + O2 = preaustinoid A1 + A + H2O. It functions in the pathway secondary metabolite biosynthesis; terpenoid biosynthesis. Functionally, FAD-binding monooxygenase; part of the gene cluster that mediates the biosynthesis of calidodehydroaustin, a fungal meroterpenoid. The first step of the pathway is the synthesis of 3,5-dimethylorsellinic acid by the polyketide synthase ausA. 3,5-dimethylorsellinic acid is then prenylated by the polyprenyl transferase ausN. Further epoxidation by the FAD-dependent monooxygenase ausM and cyclization by the probable terpene cyclase ausL lead to the formation of protoaustinoid A. Protoaustinoid A is then oxidized to spiro-lactone preaustinoid A3 by the combined action of the FAD-binding monooxygenases ausB and ausC, and the dioxygenase ausE. Acid-catalyzed keto-rearrangement and ring contraction of the tetraketide portion of preaustinoid A3 by ausJ lead to the formation of preaustinoid A4. The aldo-keto reductase ausK, with the help of ausH, is involved in the next step by transforming preaustinoid A4 into isoaustinone which is in turn hydroxylated by the P450 monooxygenase ausI to form austinolide. The cytochrome P450 monooxygenase ausG modifies austinolide to austinol. Austinol is further acetylated to austin by the O-acetyltransferase ausP, which spontaneously changes to dehydroaustin. The cytochrome P450 monooxygenase ausR then converts dehydroaustin is into 7-dehydrodehydroaustin. The hydroxylation catalyzed by ausR permits the O-acetyltransferase ausQ to add an additional acetyl group to the molecule, leading to the formation of acetoxydehydroaustin. The short chain dehydrogenase ausT catalyzes the reduction of the double bond present between carbon atoms 1 and 2 to convert 7-dehydrodehydroaustin into 1,2-dihydro-7-hydroxydehydroaustin. AusQ catalyzes not only an acetylation reaction but also the addition of the PKS ausV diketide product to 1,2-dihydro-7-hydroxydehydroaustin, forming precalidodehydroaustin. Finally, the iron/alpha-ketoglutarate-dependent dioxygenase converts precalidodehydroaustin into calidodehydroaustin. This chain is FAD-binding monooxygenase ausC, found in Aspergillus calidoustus.